The sequence spans 487 residues: 3-octaprenyl-4-hydroxybenzoate carboxy-lyase (487 aa).

N172 provides a ligand contact to Mn(2+). Residues I175–R177, R189–L191, and R194–G195 each bind prenylated FMN. Residue E238 coordinates Mn(2+). D287 functions as the Proton donor in the catalytic mechanism.

It belongs to the UbiD family. In terms of assembly, homohexamer. Requires prenylated FMN as cofactor. It depends on Mn(2+) as a cofactor.

The protein localises to the cell membrane. It catalyses the reaction a 4-hydroxy-3-(all-trans-polyprenyl)benzoate + H(+) = a 2-(all-trans-polyprenyl)phenol + CO2. Its pathway is cofactor biosynthesis; ubiquinone biosynthesis. Functionally, catalyzes the decarboxylation of 3-octaprenyl-4-hydroxy benzoate to 2-octaprenylphenol, an intermediate step in ubiquinone biosynthesis. The chain is 3-octaprenyl-4-hydroxybenzoate carboxy-lyase from Actinobacillus pleuropneumoniae serotype 3 (strain JL03).